The following is a 962-amino-acid chain: Vacuolar membrane protease (962 aa).

Residues 1 to 15 (MVSSRRGFNPIAFTP) are Cytoplasmic-facing. Residues 16 to 36 (WPVTILSSLVYLALIIPIIVV) form a helical membrane-spanning segment. At 37 to 390 (HHLVPPAPKE…FQLNTLFGHS (354 aa)) the chain is on the vacuolar side. N-linked (GlcNAc...) asparagine glycans are attached at residues N110 and N113. Residues H169 and D181 each contribute to the Zn(2+) site. The active-site Proton acceptor is E215. The Zn(2+) site is built by E216, E241, and H314. A helical transmembrane segment spans residues 391–411 (VALLVVAPLLLIITSVALFAV). Residues 412-440 (DKMYMFSMYTYISESGGQVSLYGLRGMFR) are Cytoplasmic-facing. A helical transmembrane segment spans residues 441–461 (FPLILGISTALTIALAFLIMK). Residues 462–472 (VNPFIIYSSPY) lie on the Vacuolar side of the membrane. The chain crosses the membrane as a helical span at residues 473 to 493 (AVWSMMLSTCMFFAWFISCVA). At 494–503 (DFARPSALHR) the chain is on the cytoplasmic side. Residues 504–524 (AYSFSWMFGIMWVFLVIATVY) traverse the membrane as a helical segment. Topologically, residues 525-534 (QKQHGIASSY) are vacuolar. A helical transmembrane segment spans residues 535–555 (FIVFYFAGVAVATWISYLELF). The Cytoplasmic portion of the chain corresponds to 556–667 (GLPKTQDYAR…WSIYLMSSAW (112 aa)). The tract at residues 568–617 (GRLSDRTPSSDSHFLAPSADELPSSSSAAGRDFNPEDVEDEEPTESTSLL) is disordered. Positions 602 to 611 (PEDVEDEEPT) are enriched in acidic residues. The chain crosses the membrane as a helical span at residues 668-688 (ILQFLLVAPIVIILLGQLGLF). Residues 689–704 (LTSATYQIGADGGSQL) lie on the Vacuolar side of the membrane. The helical transmembrane segment at 705–725 (VIYIGIAVLSVLILLPLFPFI) threads the bilayer. At 726–731 (HRFTYH) the chain is on the cytoplasmic side. The chain crosses the membrane as a helical span at residues 732-752 (IPTFLLFILIGTLVYNLTAFP). Residues 753-962 (FSHSNRLKLA…LVEGSYSFKL (210 aa)) are Vacuolar-facing. N-linked (GlcNAc...) asparagine glycosylation occurs at N834.

It belongs to the peptidase M28 family. Zn(2+) is required as a cofactor.

The protein localises to the vacuole membrane. In terms of biological role, may be involved in vacuolar sorting and osmoregulation. This chain is Vacuolar membrane protease, found in Arthroderma benhamiae (strain ATCC MYA-4681 / CBS 112371) (Trichophyton mentagrophytes).